The following is a 337-amino-acid chain: D-alanine--D-alanine ligase (337 aa).

The ATP-grasp domain occupies 124 to 330 (KMWFSALGIP…FTEYLSLVIN (207 aa)). 154–209 (ALAQWGSIFVKAASQGSSVGCYKVDDSAKVAGVLKDAFGYAPYVIVEKTIKARELE) contributes to the ATP binding site. Residues D284, E297, and N299 each contribute to the Mg(2+) site.

The protein belongs to the D-alanine--D-alanine ligase family. The cofactor is Mg(2+). Requires Mn(2+) as cofactor.

Its subcellular location is the cytoplasm. It carries out the reaction 2 D-alanine + ATP = D-alanyl-D-alanine + ADP + phosphate + H(+). Its pathway is cell wall biogenesis; peptidoglycan biosynthesis. Its function is as follows. Cell wall formation. The polypeptide is D-alanine--D-alanine ligase (Shewanella baltica (strain OS185)).